The sequence spans 241 residues: 3-deoxy-manno-octulosonate cytidylyltransferase (241 aa).

Belongs to the KdsB family.

The protein localises to the cytoplasm. The enzyme catalyses 3-deoxy-alpha-D-manno-oct-2-ulosonate + CTP = CMP-3-deoxy-beta-D-manno-octulosonate + diphosphate. The protein operates within nucleotide-sugar biosynthesis; CMP-3-deoxy-D-manno-octulosonate biosynthesis; CMP-3-deoxy-D-manno-octulosonate from 3-deoxy-D-manno-octulosonate and CTP: step 1/1. It functions in the pathway bacterial outer membrane biogenesis; lipopolysaccharide biosynthesis. In terms of biological role, activates KDO (a required 8-carbon sugar) for incorporation into bacterial lipopolysaccharide in Gram-negative bacteria. The polypeptide is 3-deoxy-manno-octulosonate cytidylyltransferase (Rickettsia rickettsii (strain Sheila Smith)).